We begin with the raw amino-acid sequence, 203 residues long: Thymidylate kinase (203 aa).

Residue 7-14 (GGEGAGKT) coordinates ATP.

Belongs to the thymidylate kinase family.

It catalyses the reaction dTMP + ATP = dTDP + ADP. Functionally, phosphorylation of dTMP to form dTDP in both de novo and salvage pathways of dTTP synthesis. This Chlamydia trachomatis serovar L2 (strain ATCC VR-902B / DSM 19102 / 434/Bu) protein is Thymidylate kinase.